Consider the following 827-residue polypeptide: SID1 transmembrane family member 1 (827 aa).

The N-terminal stretch at M1–A19 is a signal peptide. Topologically, residues A20–S309 are extracellular. N-linked (GlcNAc...) asparagine glycosylation is found at N57, N67, N83, N136, and N282. A helical transmembrane segment spans residues S310–V330. At H331 to K442 the chain is on the cytoplasmic side. The tract at residues A355 to M408 is disordered. A compositionally biased stretch (polar residues) spans P364–E374. Residues S375 to D397 show a composition bias toward low complexity. The segment covering S398–M408 has biased composition (acidic residues). A helical membrane pass occupies residues I443–V463. Residues I464–A494 are Extracellular-facing. N471 is a glycosylation site (N-linked (GlcNAc...) asparagine). Residues F495 to V515 traverse the membrane as a helical segment. Topologically, residues L516–H541 are cytoplasmic. Residues F542–Y562 traverse the membrane as a helical segment. The Extracellular segment spans residues H563–Q572. A glycan (N-linked (GlcNAc...) asparagine) is linked at N567. Residues F573–Y590 form a helical membrane-spanning segment. The Cytoplasmic segment spans residues Q591 to S600. A helical transmembrane segment spans residues A601–F621. The Extracellular portion of the chain corresponds to G622 to V626. Residues W627–I647 traverse the membrane as a helical segment. The Cytoplasmic portion of the chain corresponds to Y648–R683. A helical transmembrane segment spans residues M684 to Y704. At R705 to A710 the chain is on the extracellular side. The helical transmembrane segment at S711–M731 threads the bilayer. At K732–P741 the chain is on the cytoplasmic side. The helical transmembrane segment at V742–F762 threads the bilayer. Residues Q763–H791 lie on the Extracellular side of the membrane. N-linked (GlcNAc...) asparagine glycosylation occurs at N764. Residues D792 to L812 form a helical membrane-spanning segment. Residues D813–F827 lie on the Cytoplasmic side of the membrane.

This sequence belongs to the SID1 family.

It is found in the membrane. In terms of biological role, in vitro binds long double-stranded RNA (dsRNA) (500 and 700 base pairs), but not dsRNA shorter than 300 bp. Not involved in RNA autophagy, a process in which RNA is directly imported into lysosomes in an ATP-dependent manner, and degraded. In Homo sapiens (Human), this protein is SID1 transmembrane family member 1 (SIDT1).